A 1348-amino-acid chain; its full sequence is Adhesion G protein-coupled receptor F5 (1348 aa).

An N-terminal signal peptide occupies residues 1 to 21 (MRSPRTFTFYFLLLVICSSEA). Topologically, residues 22 to 1019 (ALSTPTEPIV…LKILLDIISY (998 aa)) are extracellular. Positions 163-271 (PEAFITLKLK…NSFQGTPSNE (109 aa)) constitute an SEA domain. Ig-like domains follow at residues 268-366 (PSNE…LDVT), 367-464 (PIRI…IAVT), and 469-559 (ANLT…KDVT). N-linked (GlcNAc...) asparagine glycosylation is found at asparagine 270, asparagine 286, asparagine 337, and asparagine 349. Residues cysteine 291 and cysteine 348 are joined by a disulfide bond. Cysteine 389 and cysteine 447 are joined by a disulfide. N-linked (GlcNAc...) asparagine glycans are attached at residues asparagine 470, asparagine 538, and asparagine 665. Cysteine 490 and cysteine 543 are joined by a disulfide. The residue at position 818 (serine 818) is a Phosphoserine. One can recognise a GAIN-B domain in the interval 841–1005 (TPPFLAHPNV…SILMSPDSPD (165 aa)). Disulfide bonds link cysteine 953–cysteine 987 and cysteine 972–cysteine 989. The tract at residues 953 to 1005 (CVFWNFSLANNTGGWDSSGCSVEDDGRDNRDRVFCKCNHLTSFSILMSPDSPD) is GPS. Residues 993–1008 (TSFSILMSPDSPDPGS) are tethered agonist. Residues 1020–1040 (IGLGFSIVSLAACLVVEAMVW) traverse the membrane as a helical segment. Residues 1041–1055 (KSVTKNRTSYMRHIC) lie on the Cytoplasmic side of the membrane. A helical membrane pass occupies residues 1056 to 1076 (IVNIAFCLLIADIWFIVAGAI). Residues 1077–1092 (HDGRYPLNETACVAAT) are Extracellular-facing. Residues 1093-1113 (FFIHFFYLSVFFWMLTLGLML) traverse the membrane as a helical segment. Residues 1114–1130 (FYRLIFILHDASKSTQK) lie on the Cytoplasmic side of the membrane. A helical transmembrane segment spans residues 1131-1151 (AIAFSLGYGCPLIISSITVGV). Residues 1152-1175 (TQPQEVYMRKNACWLNWEDTRALL) are Extracellular-facing. Residues 1176-1196 (AFAIPALIIVVVNVSITVVVI) form a helical membrane-spanning segment. Topologically, residues 1197–1221 (TKILRPSIGDKPGKQEKSSLFQISK) are cytoplasmic. The chain crosses the membrane as a helical span at residues 1222 to 1242 (SIGVLTPLLGLTWGFGLATVI). Topologically, residues 1243–1250 (QGSNAVFH) are extracellular. A helical transmembrane segment spans residues 1251 to 1271 (IIFTLLNAFQGLFILLFGCLW). Residues 1272-1348 (DQKVQEALLH…NSSSAYSLLN (77 aa)) lie on the Cytoplasmic side of the membrane. Phosphothreonine is present on threonine 1302. Serine 1309 is subject to Phosphoserine. The disordered stretch occupies residues 1328–1348 (STPETTSSSLENSSSAYSLLN).

Belongs to the G-protein coupled receptor 2 family. Adhesion G-protein coupled receptor (ADGR) subfamily. Homodimer; disulfide-linked. Heterodimer of 2 chains generated by proteolytic processing; the large extracellular N-terminal fragment and the membrane-bound C-terminal fragment predominantly remain associated and non-covalently linked. Fragment generates by the processing enzyme furin remains attached to the extracellular N-terminal fragment. Interacts (via N-terminal extracellular domain) with SFTPD. Highly glycosylated. In terms of processing, proteolytically cleaved at multiple sites: one in the GPS region of the GAIN-B domain (S1 site) and the other in the SEA domain (S2 site). The proteolytic cleavage at S1 site generates an extracellular subunit and a seven-transmembrane subunit. The proteolytic cleavage at S2 site generates a fragment that undergoes proteolytic cleavage by the processing enzyme furin. Widely expressed, with highest levels in lung, pancreas, kidney and heart. In the kidney, expressed more abundantly in the medulla than in the cortex, predominantly expressed in A-intercalated cells (at protein level). Expressed in endothelial cells from various tissues, including brain, heart, kidney, liver, lung and muscle. In the lung, expressed in alveolar type II (ATII) cells (at protein level). Expressed in pancreatic islets of Langerhans, predominantly in delta cells, as well as in endothelial cells. Expressed in white adipose tissue.

It localises to the cell membrane. With respect to regulation, as an adhesion G protein-coupled receptor (aGPCR) exhibits a large N-terminal extracellular domain containing highly conserved GPCR autoproteolysis-inducing (GAIN) domain. During synthesis, intracellular autoproteolytic processing of nascent chain within the GAIN domain generates a mature protein, consisting of an N-terminal fragment that is non-covalently linked to the C-terminal fragment. The mature protein is routed to the plasma membrane where the N- and C-terminal fragments remain associated, forming the holoreceptor. Dissociation of the aGPCR fragments stimulates G protein signaling through the action of the tethered-peptide agonist stalk that is occluded within the GAIN domain in the holoreceptor form. This dissociation might be induced by ligand binding, such as that of sFNDC4. Functionally, adhesion G protein-coupled receptor. In alveolar type II (ATII or AT2) cells, required for normal lung surfactant homeostasis. Modulation of both surfactant secretion and uptake by ATII cells is mediated by the downstream activation of GNAQ/GNA11 proteins and may be a consequence of increased cortical F-actin assembly induced by ADGRF5 activation. In the kidney, may play a role in the regulation of acid excretion into the primary urine, possibly by regulating the surface expression of V-ATPase proton pump. As a receptor for soluble FNDC4 (sFNDC4), required for proper systemic glucose tolerance, specifically sensitizing white adipose tissue to insulin. Also plays a role in sFNDC4-induced decrease of local inflammation in white adipose tissue. The chain is Adhesion G protein-coupled receptor F5 (Adgrf5) from Mus musculus (Mouse).